The primary structure comprises 178 residues: Inorganic pyrophosphatase (178 aa).

Residues lysine 30, arginine 44, and tyrosine 56 each coordinate substrate. Positions 66, 71, and 103 each coordinate Mg(2+). Position 140 (tyrosine 140) interacts with substrate.

It belongs to the PPase family. In terms of assembly, homohexamer. It depends on Mg(2+) as a cofactor.

The protein resides in the cytoplasm. It carries out the reaction diphosphate + H2O = 2 phosphate + H(+). Catalyzes the hydrolysis of inorganic pyrophosphate (PPi) forming two phosphate ions. The protein is Inorganic pyrophosphatase of Pyrococcus horikoshii (strain ATCC 700860 / DSM 12428 / JCM 9974 / NBRC 100139 / OT-3).